Consider the following 154-residue polypeptide: SsrA-binding protein (154 aa).

Residues 130–154 (KLHDKRETERRRQDQRDIQRAIKRA) form a disordered region. Residues 133-154 (DKRETERRRQDQRDIQRAIKRA) show a composition bias toward basic and acidic residues.

It belongs to the SmpB family.

It is found in the cytoplasm. In terms of biological role, required for rescue of stalled ribosomes mediated by trans-translation. Binds to transfer-messenger RNA (tmRNA), required for stable association of tmRNA with ribosomes. tmRNA and SmpB together mimic tRNA shape, replacing the anticodon stem-loop with SmpB. tmRNA is encoded by the ssrA gene; the 2 termini fold to resemble tRNA(Ala) and it encodes a 'tag peptide', a short internal open reading frame. During trans-translation Ala-aminoacylated tmRNA acts like a tRNA, entering the A-site of stalled ribosomes, displacing the stalled mRNA. The ribosome then switches to translate the ORF on the tmRNA; the nascent peptide is terminated with the 'tag peptide' encoded by the tmRNA and targeted for degradation. The ribosome is freed to recommence translation, which seems to be the essential function of trans-translation. This is SsrA-binding protein from Synechococcus elongatus (strain ATCC 33912 / PCC 7942 / FACHB-805) (Anacystis nidulans R2).